We begin with the raw amino-acid sequence, 306 residues long: Protein LOT5 (306 aa).

This sequence belongs to the LOT5 family.

It is found in the cytoplasm. The protein resides in the nucleus. This is Protein LOT5 (LOT5) from Saccharomyces cerevisiae (strain ATCC 204508 / S288c) (Baker's yeast).